The sequence spans 461 residues: Protein naked cuticle homolog 2 (461 aa).

The segment at 1–106 (MGKFQSKHAA…DGEKAASREG (106 aa)) is disordered. The N-myristoyl glycine moiety is linked to residue Gly-2. Basic and acidic residues-rich tracts occupy residues 34–73 (RGAE…DKGS) and 97–106 (DGEKAASREG). The interval 121 to 186 (QCDVSVEEDN…LRVKLTVSPE (66 aa)) is interaction with DVL1, DVL2 and DVL3. Residues 127–162 (EEDNRQEWTFTLYDFDNSGKVTREDMSSLMHTIYEV) enclose the EF-hand domain. Residues Asp-140, Asp-142, Ser-144, Lys-146, and Asp-151 each contribute to the Ca(2+) site. 5 disordered regions span residues 176 to 205 (TLRV…PTRG), 263 to 302 (YTSK…HAIH), 321 to 359 (TRAL…PGKA), 372 to 414 (SAQD…GQPT), and 441 to 461 (HEHH…FHPS). The segment covering 188–205 (SSKKECPLTGQDREPTRG) has biased composition (basic and acidic residues). Residues 307–396 (QVLAEHVIPA…PPQPYGHKRY (90 aa)) form an interaction with TGFA region. Residues 341–350 (PKGPGKPLGT) show a composition bias toward low complexity. Over residues 380-390 (PQPPPQPPPQP) the composition is skewed to pro residues.

Belongs to the NKD family. In terms of assembly, interacts with RNF25, TGFA (via cytoplasmic domain), and PPP2R3A. Interacts with DVL1, DVL2 and DVL3. Post-translationally, ubiquitinated, leading to rapid proteasomal degradation. Interaction with TGFA interferes with RNF25 binding and protects against ubiquitination mediated by RNF25. Expressed in the cecum, colon, esophagus, ileum, jejunum, skin and stomach.

It localises to the cell membrane. The protein localises to the cytoplasm. It is found in the cytoplasmic vesicle. Functionally, cell autonomous antagonist of the canonical Wnt signaling pathway. May activate a second Wnt signaling pathway that controls planar cell polarity. Required for processing of TGFA and for targeting of TGFA to the basolateral membrane of polarized epithelial cells. The sequence is that of Protein naked cuticle homolog 2 (Nkd2) from Mus musculus (Mouse).